The sequence spans 399 residues: Elongation factor Tu (399 aa).

Positions K10–E204 constitute a tr-type G domain. The segment at G19 to T26 is G1. Residue G19–T26 participates in GTP binding. T26 contacts Mg(2+). The segment at G60 to N64 is G2. The interval D81–G84 is G3. GTP is bound by residues D81–H85 and N136–D139. The segment at N136–D139 is G4. The segment at S174–L176 is G5.

This sequence belongs to the TRAFAC class translation factor GTPase superfamily. Classic translation factor GTPase family. EF-Tu/EF-1A subfamily. Monomer.

It is found in the cytoplasm. It catalyses the reaction GTP + H2O = GDP + phosphate + H(+). Functionally, GTP hydrolase that promotes the GTP-dependent binding of aminoacyl-tRNA to the A-site of ribosomes during protein biosynthesis. In Prochlorococcus marinus (strain MIT 9211), this protein is Elongation factor Tu.